A 727-amino-acid chain; its full sequence is Glucans biosynthesis glucosyltransferase H (727 aa).

A disordered region spans residues 18–45; it reads SAMPNERPGAMEPQSLTEMPEGFPRRST. 7 helical membrane-spanning segments follow: residues 58 to 78, 90 to 110, 278 to 298, 408 to 428, 460 to 480, 496 to 516, and 572 to 592; these read FFVV…MGAV, LVLL…CSGI, LQQF…GWWV, IMAY…LMLA, LFYI…LLLL, IFSV…MMFI, and LLAW…ISAW.

The protein belongs to the glycosyltransferase 2 family. OpgH subfamily.

The protein resides in the cell inner membrane. It functions in the pathway glycan metabolism; osmoregulated periplasmic glucan (OPG) biosynthesis. In terms of biological role, involved in the biosynthesis of osmoregulated periplasmic glucans (OPGs). The polypeptide is Glucans biosynthesis glucosyltransferase H (Shewanella putrefaciens (strain CN-32 / ATCC BAA-453)).